A 946-amino-acid polypeptide reads, in one-letter code: Nonribosomal peptide synthetase pngA (946 aa).

The segment at 32-450 (AIASREPTRY…AGREKDSIIV (419 aa)) is adenylation (A) domain. Residues 580 to 659 (QPRSGLEQSL…TLSDALKQHA (80 aa)) form the Carrier domain. At Ser618 the chain carries O-(pantetheine 4'-phosphoryl)serine. The segment at 681–933 (PIWLVHPVGG…ILDAENIFSF (253 aa)) is thioesterase (TE) domain.

This sequence belongs to the NRP synthetase family.

The catalysed reaction is 2 3-phenylpyruvate + H(+) = phenguignardate + H2O. Its function is as follows. Nonribosomal peptide synthetase that mediates the biosynthesis of phenguignardic acid. PngA alone is sufficient for phenguignardic acid synthesis. PngA first activates phenylpyruvic acid (PPA) through its A domain to AMP-PPA. The PPA unit is then loaded to the T domain and eventually transferred to the TE domain. Another PPA unit is then loaded onto the T domain. The TE domain likely promotes the enolate formation on the attached unit, followed by a nucleophilic attack on the carbonyl to yield an ether linkage between the two units. Finally, the TE domain probably catalyzes a similar reaction to give the cyclized dioxolanone core and releases phenguignardic acid. This Aspergillus terreus (strain NIH 2624 / FGSC A1156) protein is Nonribosomal peptide synthetase pngA.